The primary structure comprises 420 residues: Phosphoribosylamine--glycine ligase (420 aa).

Residues 108 to 314 (KQIMVKYGIP…FAQNIDDILH (207 aa)) form the ATP-grasp domain. 134–195 (IEEQGAPIVV…EEFLAGEEFS (62 aa)) lines the ATP pocket. 2 residues coordinate Mg(2+): E284 and N286.

This sequence belongs to the GARS family. Mg(2+) is required as a cofactor. It depends on Mn(2+) as a cofactor.

It catalyses the reaction 5-phospho-beta-D-ribosylamine + glycine + ATP = N(1)-(5-phospho-beta-D-ribosyl)glycinamide + ADP + phosphate + H(+). Its pathway is purine metabolism; IMP biosynthesis via de novo pathway; N(1)-(5-phospho-D-ribosyl)glycinamide from 5-phospho-alpha-D-ribose 1-diphosphate: step 2/2. This is Phosphoribosylamine--glycine ligase from Streptococcus suis.